A 158-amino-acid polypeptide reads, in one-letter code: Ribonuclease H (158 aa).

The region spanning Glu3–Glu144 is the RNase H type-1 domain. 4 residues coordinate Mg(2+): Asp12, Glu50, Asp72, and Asp136. The interval Gln137–Ser158 is disordered.

Belongs to the RNase H family. As to quaternary structure, monomer. Requires Mg(2+) as cofactor.

Its subcellular location is the cytoplasm. It catalyses the reaction Endonucleolytic cleavage to 5'-phosphomonoester.. In terms of biological role, endonuclease that specifically degrades the RNA of RNA-DNA hybrids. This chain is Ribonuclease H, found in Shewanella sp. (strain ANA-3).